The chain runs to 360 residues: Inward rectifier potassium channel 13 (360 aa).

Topologically, residues 1–50 (MDGSHCKVIAPLLTERHQRMVTKDGHSTLQMDGAQTGLAYLRDAWGILMD) are cytoplasmic. Residues 51 to 77 (MRWRWMMLVFSASFVIHWLVFAVLWYI) form a helical membrane-spanning segment. Residues 78–105 (LAEMNGDLGLDHDAPPENHTICVKYITS) are Extracellular-facing. An intramembrane region (helical; Pore-forming) is located at residues 106-122 (FTAAFSFSLETQLTIGY). The Selectivity filter motif lies at 119–124 (TIGYGT). The Extracellular portion of the chain corresponds to 123 to 131 (GTMFPSGDC). The helical transmembrane segment at 132–157 (PSAIALLAIQMLLGLMLEAFITGAFV) threads the bilayer. At 158–360 (AKIARPKNRA…FQISETGLTE (203 aa)) the chain is on the cytoplasmic side. The residue at position 287 (serine 287) is a Phosphoserine.

The protein belongs to the inward rectifier-type potassium channel (TC 1.A.2.1) family. Homotetramer. Interacts with RAB28; the interaction may facilitate cone outer segments phagocytosis. Phosphorylation at Ser-287 by PKA increases them.

Its subcellular location is the membrane. The protein resides in the cell membrane. The catalysed reaction is K(+)(in) = K(+)(out). Inhibited by Ba(2+) and Cs(+), although sensitivity to those inhibitors is much lower than in other Kir channels. Its function is as follows. Inward rectifier potassium channels are characterized by a greater tendency to allow potassium to flow into the cell rather than out of it. Their voltage dependence is regulated by the concentration of extracellular potassium; as external potassium is raised, the voltage range of the channel opening shifts to more positive voltages. The inward rectification is mainly due to the blockage of outward current by internal magnesium. KCNJ13 has a very low single channel conductance, low sensitivity to block by external barium and cesium, and no dependence of its inward rectification properties on the internal blocking particle magnesium. This chain is Inward rectifier potassium channel 13 (KCNJ13), found in Bos taurus (Bovine).